A 743-amino-acid polypeptide reads, in one-letter code: Ovocleidin-116 (743 aa).

The first 18 residues, 1-18 (MRATLFCLCLCLLGTVLP), serve as a signal peptide directing secretion. A disulfide bridge links Cys31 with Cys42. Asn62 carries N-linked (GlcNAc...) asparagine glycosylation. The segment at 68-225 (KEEGDHQGTI…GTMGTGDSAI (158 aa)) is disordered. A compositionally biased stretch (polar residues) spans 129-141 (DSNSVYPTSTSVE). Gly residues predominate over residues 169–179 (GPHGDGDGGNG). A glycan (N-linked (GlcNAc...) asparagine; partial) is linked at Asn293. 6 disordered regions span residues 333–356 (GDSV…ATEI), 385–454 (SGKG…GPER), 505–534 (ARTQ…QQEV), 549–577 (RHRA…STGG), 628–649 (DPWV…TVAG), and 692–743 (SGVG…RQSL). Residues 402 to 420 (ATMTTRGGRGTASSGLTTG) are compositionally biased toward low complexity. Positions 421 to 431 (DCSTAASTPSR) are enriched in polar residues. Positions 549–558 (RHRARVRPES) are enriched in basic and acidic residues.

It belongs to the osteoregulin family. Asn-62 is fully glycosylated, whereas only less than 10% of Asn-293 seem to be glycosylated. In terms of tissue distribution, in the eggshell, expressed mainly in the palisade and mammillary layers. Expression also detected in the hypertrophic zone of the epiphyseal growth plate, and in cortical and medullary bone (at protein level). Highly expressed in uterus. Not detected in the proximal oviduct, liver, magnum, duodenum and kidney.

It localises to the secreted. The protein resides in the extracellular space. It is found in the extracellular matrix. Its function is as follows. Major component of the eggshell matrix. May play an important role in the regulation of calcite growth during eggshell calcification. May also regulate the mineralization process in developing and growing bones. The protein is Ovocleidin-116 of Gallus gallus (Chicken).